Here is a 270-residue protein sequence, read N- to C-terminus: 2-C-methyl-D-erythritol 4-phosphate cytidylyltransferase (270 aa).

The tract at residues 1–33 (MSDESRPSPAETPATTFAETSAETSAAGRSPAR) is disordered. Positions 7–27 (PSPAETPATTFAETSAETSAA) are enriched in low complexity.

It belongs to the IspD/TarI cytidylyltransferase family. IspD subfamily.

It carries out the reaction 2-C-methyl-D-erythritol 4-phosphate + CTP + H(+) = 4-CDP-2-C-methyl-D-erythritol + diphosphate. It participates in isoprenoid biosynthesis; isopentenyl diphosphate biosynthesis via DXP pathway; isopentenyl diphosphate from 1-deoxy-D-xylulose 5-phosphate: step 2/6. In terms of biological role, catalyzes the formation of 4-diphosphocytidyl-2-C-methyl-D-erythritol from CTP and 2-C-methyl-D-erythritol 4-phosphate (MEP). The chain is 2-C-methyl-D-erythritol 4-phosphate cytidylyltransferase from Streptomyces coelicolor (strain ATCC BAA-471 / A3(2) / M145).